We begin with the raw amino-acid sequence, 129 residues long: Iron-sulfur cluster assembly 1 homolog, mitochondrial (129 aa).

The transit peptide at 1–12 (MSASIARATVRA) directs the protein to the mitochondrion. Residues C57, C121, and C123 each coordinate Fe cation.

It belongs to the HesB/IscA family.

It localises to the mitochondrion. Functionally, involved in the maturation of mitochondrial 4Fe-4S proteins functioning late in the iron-sulfur cluster assembly pathway. Probably involved in the binding of an intermediate of Fe/S cluster assembly. This Danio rerio (Zebrafish) protein is Iron-sulfur cluster assembly 1 homolog, mitochondrial (isca1).